The sequence spans 138 residues: Phosphoribosyl-AMP cyclohydrolase (138 aa).

Asp-84 is a binding site for Mg(2+). Cys-85 lines the Zn(2+) pocket. Residues Asp-86 and Asp-88 each coordinate Mg(2+). Zn(2+) is bound by residues Cys-102 and Cys-109.

The protein belongs to the PRA-CH family. Homodimer. The cofactor is Mg(2+). Zn(2+) is required as a cofactor.

The protein localises to the cytoplasm. The enzyme catalyses 1-(5-phospho-beta-D-ribosyl)-5'-AMP + H2O = 1-(5-phospho-beta-D-ribosyl)-5-[(5-phospho-beta-D-ribosylamino)methylideneamino]imidazole-4-carboxamide. It functions in the pathway amino-acid biosynthesis; L-histidine biosynthesis; L-histidine from 5-phospho-alpha-D-ribose 1-diphosphate: step 3/9. Catalyzes the hydrolysis of the adenine ring of phosphoribosyl-AMP. This Burkholderia cenocepacia (strain ATCC BAA-245 / DSM 16553 / LMG 16656 / NCTC 13227 / J2315 / CF5610) (Burkholderia cepacia (strain J2315)) protein is Phosphoribosyl-AMP cyclohydrolase.